A 493-amino-acid chain; its full sequence is Cytochrome P450 monooxygenase mfmF (493 aa).

The next 2 helical transmembrane spans lie at 3–23 and 301–321; these read SLIP…RLFF and VLFA…FHLV. Residue Cys-440 participates in heme binding.

This sequence belongs to the cytochrome P450 family. Heme is required as a cofactor.

It localises to the membrane. The protein operates within secondary metabolite biosynthesis; terpenoid biosynthesis. Functionally, cytochrome P450 monooxygenase; part of the gene cluster that mediates the biosynthesis of the phthalide-terpenoid hybrid 11'-O-desmethylfendlerol. Within the pathway, mfmF catalyzes C-3 hydroxylation of 5-hydroxy-4-(hydroxymethyl)-7-methoxy-6-methylphthalide to yield cyclopolic acid. The biosynthesis of 11'-O-desmethylfendlerol begins with the NR-PKS mfmB that forms 3,5-dimethylorsellinic acid (DMOA), which is then transformed into the phthalide 5,7-dihydroxy-4-(hydroxymethyl)-6-methylphthalide by the cytochrome P450 monooxygenase mfmA and the hydrolase mfmC. Subsequently, the methyltransferase mfmE catalyzes 7-O-methylation to yield 5-hydroxy-4-(hydroxymethyl)-7-methoxy-6-methylphthalide, which undergoes C-3 hydroxylation by the cytochrome P450 monooxygenase mfmF. The resultant cyclopolic acid (2,5-dihydroxy-4-(hydroxymethyl)-7-methoxy-6-methylphthalide) is then farnesylated by the DMATS-type prenyltransferase mfmD to afford 5-O-farnesylcyclopolic acid. Finally, the Pyr4-family terpene cyclase mfmH cyclizes the farnesyl moiety of 5-O-farnesylcyclopolic acid into a drimane-like structure, thus completing the biosynthesis of 11'-O-desmethylfendlerol. This Annulohypoxylon moriforme (Filamentous fungus) protein is Cytochrome P450 monooxygenase mfmF.